The chain runs to 293 residues: tRNA-cytidine(32) 2-sulfurtransferase (293 aa).

Positions 62–67 (SGGKDS) match the PP-loop motif motif. Cys137, Cys140, and Cys228 together coordinate [4Fe-4S] cluster.

This sequence belongs to the TtcA family. In terms of assembly, homodimer. It depends on Mg(2+) as a cofactor. [4Fe-4S] cluster serves as cofactor.

The protein localises to the cytoplasm. It carries out the reaction cytidine(32) in tRNA + S-sulfanyl-L-cysteinyl-[cysteine desulfurase] + AH2 + ATP = 2-thiocytidine(32) in tRNA + L-cysteinyl-[cysteine desulfurase] + A + AMP + diphosphate + H(+). It participates in tRNA modification. Catalyzes the ATP-dependent 2-thiolation of cytidine in position 32 of tRNA, to form 2-thiocytidine (s(2)C32). The sulfur atoms are provided by the cysteine/cysteine desulfurase (IscS) system. In Brucella melitensis biotype 1 (strain ATCC 23456 / CCUG 17765 / NCTC 10094 / 16M), this protein is tRNA-cytidine(32) 2-sulfurtransferase.